Here is a 304-residue protein sequence, read N- to C-terminus: Aspartate carbamoyltransferase catalytic subunit (304 aa).

Residues Arg-53 and Thr-54 each coordinate carbamoyl phosphate. An L-aspartate-binding site is contributed by Lys-82. Carbamoyl phosphate contacts are provided by Arg-103, His-131, and Gln-134. The L-aspartate site is built by Arg-163 and Arg-224. Carbamoyl phosphate-binding residues include Leu-263 and Pro-264.

The protein belongs to the aspartate/ornithine carbamoyltransferase superfamily. ATCase family. In terms of assembly, heterooligomer of catalytic and regulatory chains.

The catalysed reaction is carbamoyl phosphate + L-aspartate = N-carbamoyl-L-aspartate + phosphate + H(+). Its pathway is pyrimidine metabolism; UMP biosynthesis via de novo pathway; (S)-dihydroorotate from bicarbonate: step 2/3. In terms of biological role, catalyzes the condensation of carbamoyl phosphate and aspartate to form carbamoyl aspartate and inorganic phosphate, the committed step in the de novo pyrimidine nucleotide biosynthesis pathway. This is Aspartate carbamoyltransferase catalytic subunit from Haloquadratum walsbyi (strain DSM 16790 / HBSQ001).